The primary structure comprises 393 residues: MLDPFSEKAKELLKEFGSINDFLNSIPRIVDVEEVIERVKIASDRKLLEGFVDIEDIKDLAQFYALLGALSYSPYGLELELVKKANILLYSERIRREKEIRPEEISLRINKAIEFPIDDLKKIERVFGKLPEYTIHLAEFLDLIPGERLSEYYIYNGNVYLRKEDLIKVWMKAFERNIEKSVNMLYEIRDELPGFFREVLGGIKEVAEQEFGKSGEVKAGTLRPDLFPPCVKNALKGVPQGLRNYAITVLLTSFLSYARICPNPPRRNVRVKDCIDDIRIITDEILPLIIEAANRCSPPLFEDQPNEIKNIWYHLGFGYTANPKLEDSGNSTWYFPPNCDKIRANAPQLCTPDKHCKYVRNPLTYYLRRLYLEGRKNASKGGNERGEKRVLQQ.

[4Fe-4S] cluster-binding residues include cysteine 230, cysteine 339, cysteine 350, and cysteine 356.

It belongs to the eukaryotic-type primase large subunit family. Heterodimer of a small subunit (PriS) and a large subunit (PriL). [4Fe-4S] cluster serves as cofactor.

Functionally, regulatory subunit of DNA primase, an RNA polymerase that catalyzes the synthesis of short RNA molecules used as primers for DNA polymerase during DNA replication. Stabilizes and modulates the activity of the small subunit, increasing the rate of DNA synthesis, and conferring RNA synthesis capability. The DNA polymerase activity may enable DNA primase to also catalyze primer extension after primer synthesis. May also play a role in DNA repair. Displays gap-filling and strand-displacement activities. This is DNA primase large subunit PriL from Pyrococcus abyssi (strain GE5 / Orsay).